The chain runs to 1153 residues: Nitric oxide synthase, inducible (1153 aa).

The DINNN-motif; mediates interaction with SPSB1, SPSB2 and SPSB4 signature appears at 23 to 27 (DINNN). Zn(2+)-binding residues include cysteine 110 and cysteine 115. A (6R)-L-erythro-5,6,7,8-tetrahydrobiopterin-binding site is contributed by serine 118. Cysteine 200 contacts heme b. Serine 234 is subject to Phosphoserine; by PKA. L-arginine contacts are provided by glutamine 263, tryptophan 372, tyrosine 373, and glutamate 377. (6R)-L-erythro-5,6,7,8-tetrahydrobiopterin-binding residues include arginine 381, isoleucine 462, tryptophan 463, and phenylalanine 476. Tyrosine 491 contacts heme b. Residues 515 to 535 (LKVLVKAVLFACMLMRKTMAS) are calmodulin-binding. Residues 539–677 (VTILFATETG…AFRSWAVQTF (139 aa)) enclose the Flavodoxin-like domain. FMN contacts are provided by threonine 545, glutamate 546, threonine 547, lysine 549, and serine 550. Tyrosine 575 bears the Phosphotyrosine mark. Position 578 is a phosphoserine; by PKA (serine 578). Residues serine 591, threonine 592, serine 628, arginine 633, cysteine 635, glutamate 661, and glutamine 665 each contribute to the FMN site. In terms of domain architecture, FAD-binding FR-type spans 730–970 (KNVFTMRLKS…VRNASGFHLP (241 aa)). Arginine 750 lines the NADP(+) pocket. Residue histidine 772 participates in FAD binding. Residue serine 892 is modified to Phosphoserine; by PKA. FAD is bound by residues arginine 906, tyrosine 908, serine 909, threonine 924, and alanine 926. An NADP(+)-binding site is contributed by threonine 929. Residues tyrosine 930, valine 943, cysteine 944, and serine 945 each coordinate FAD. Positions 984, 1017, 1046, 1047, 1053, 1055, 1057, and 1090 each coordinate NADP(+).

Belongs to the NOS family. In terms of assembly, homodimer. Interacts with NHERF1. Interacts with GAPDH; induced by oxidatively-modified low-densitity lipoprotein (LDL(ox)). Interacts with S100A8 and S100A9 to form the iNOS-S100A8/9 transnitrosylase complex. Interacts with SPSB1, SPSB2 and SPSB4. Interacts with ELOC and CUL5 in the presence of SPSB1 or SPSB2 or SPSB4. Forms a complex with ASL, ASS1 and HSP90AA1; the complex regulates cell-autonomous L-arginine synthesis and citrulline recycling while channeling extracellular L-arginine to nitric oxide synthesis pathway. It depends on heme b as a cofactor. Requires FAD as cofactor. FMN serves as cofactor. The cofactor is (6R)-L-erythro-5,6,7,8-tetrahydrobiopterin. In terms of processing, polyubiquitinated; mediated by SPSB1, SPSB2 and SPSB4, leading to proteasomal degradation. In terms of tissue distribution, expressed in the liver, retina, bone cells and airway epithelial cells of the lung. Not expressed in the platelets. Expressed in chondrocytes.

It localises to the cytoplasm. The protein localises to the cytosol. It catalyses the reaction 2 L-arginine + 3 NADPH + 4 O2 + H(+) = 2 L-citrulline + 2 nitric oxide + 3 NADP(+) + 4 H2O. Its activity is regulated as follows. Regulated by calcium/calmodulin. Aspirin inhibits expression and function of this enzyme and effects may be exerted at the level of translational/post-translational modification and directly on the catalytic activity. Functionally, produces nitric oxide (NO) which is a messenger molecule with diverse functions throughout the body. In macrophages, NO mediates tumoricidal and bactericidal actions. Also has nitrosylase activity and mediates cysteine S-nitrosylation of cytoplasmic target proteins such PTGS2/COX2. As component of the iNOS-S100A8/9 transnitrosylase complex involved in the selective inflammatory stimulus-dependent S-nitrosylation of GAPDH on 'Cys-247' implicated in regulation of the GAIT complex activity and probably multiple targets including ANXA5, EZR, MSN and VIM. Involved in inflammation, enhances the synthesis of pro-inflammatory mediators such as IL6 and IL8. The protein is Nitric oxide synthase, inducible of Homo sapiens (Human).